Consider the following 261-residue polypeptide: MIVVKVGGSVICKDLSKVVENLPKYAGEAVVVHGGGCLVNELLKRMGIEPKFLTHPGGVVSRYTDLETLKVFVMAMSWINKQLVASLFARGVEAVGLTGADGGVVRARRKEKVLVVDERGRQRVVDGGYVGKIVDVNVKALAPPPLKVLAPIAVSEKGELLNVDGDQLAFEVAARAGAGRLVILSDVDGLILGGRVVPRLTPEEAEELAKSEEVRGGMKRKLLMAAEAARRGVEVVISNGLADSPIDAALGGAGTHISRNI.

Residues 35–36, Arg62, and Asn162 contribute to the substrate site; that span reads GG.

This sequence belongs to the acetylglutamate kinase family. LysZ subfamily.

It is found in the cytoplasm. The enzyme catalyses [amino-group carrier protein]-C-terminal-N-(1,4-dicarboxybutan-1-yl)-L-glutamine + ATP = [amino-group carrier protein]-C-terminal-N-(1-carboxy-5-phosphooxy-5-oxopentan-1-yl)-L-glutamine + ADP. It catalyses the reaction [amino-group carrier protein]-C-terminal-gamma-(L-glutamyl)-L-glutamate + ATP = [amino-group carrier protein]-C-terminal-gamma-(5-phospho-L-glutamyl)-L-glutamate + ADP. Its pathway is amino-acid biosynthesis; L-lysine biosynthesis via AAA pathway; L-lysine from L-alpha-aminoadipate (Thermus route): step 2/5. It participates in amino-acid biosynthesis; L-arginine biosynthesis. Involved in both the arginine and lysine biosynthetic pathways. Phosphorylates the LysW-bound precursors glutamate (for arginine biosynthesis), respectively alpha-aminoadipate (for lysine biosynthesis). The sequence is that of Putative [LysW]-aminoadipate/[LysW]-glutamate kinase from Pyrobaculum calidifontis (strain DSM 21063 / JCM 11548 / VA1).